Reading from the N-terminus, the 295-residue chain is Putative aquaporin-12B (295 aa).

The Cytoplasmic portion of the chain corresponds to Met1–Arg22. The chain crosses the membrane as a helical span at residues Arg23–Ala41. The Extracellular portion of the chain corresponds to Met42–Phe55. A helical membrane pass occupies residues Gly56–Thr74. Residues Leu75–Asp76 lie on the Cytoplasmic side of the membrane. Residues Gly77–Cys114 constitute an intramembrane region (discontinuously helical). The NPA 1 motif lies at Asn81–Thr83. Residues Thr115–Cys120 lie on the Cytoplasmic side of the membrane. The helical transmembrane segment at Trp121 to Ala142 threads the bilayer. The Extracellular portion of the chain corresponds to Leu143–Thr145. A helical transmembrane segment spans residues Ser146 to Leu166. The Cytoplasmic segment spans residues His167–Ala174. The helical transmembrane segment at Tyr175–Ala191 threads the bilayer. Residues Gly192–Phe194 lie on the Extracellular side of the membrane. Positions Thr195–Ser206 form an intramembrane region, discontinuously helical. An NPA 2 motif is present at residues Asn200–Ala202. The Extracellular portion of the chain corresponds to Val207–Tyr223. The helical transmembrane segment at Trp224–His244 threads the bilayer. Over Leu245–Ser295 the chain is Cytoplasmic. A disordered region spans residues Lys257 to Ser295.

The protein belongs to the MIP/aquaporin (TC 1.A.8) family. AQP11/AQP12 subfamily. Homotetramer; each monomer provides an independent water pore.

It is found in the membrane. It carries out the reaction H2O(in) = H2O(out). Its function is as follows. Putative aquaporin. Could form homotetrameric transmembrane channels, with each monomer independently mediating water transport across the plasma membrane along its osmotic gradient. The chain is Putative aquaporin-12B from Homo sapiens (Human).